The chain runs to 194 residues: Peptide deformylase (194 aa).

Fe cation is bound by residues cysteine 105 and histidine 147. Residue glutamate 148 is part of the active site. Histidine 151 serves as a coordination point for Fe cation.

The protein belongs to the polypeptide deformylase family. Requires Fe(2+) as cofactor.

The enzyme catalyses N-terminal N-formyl-L-methionyl-[peptide] + H2O = N-terminal L-methionyl-[peptide] + formate. Its function is as follows. Removes the formyl group from the N-terminal Met of newly synthesized proteins. Requires at least a dipeptide for an efficient rate of reaction. N-terminal L-methionine is a prerequisite for activity but the enzyme has broad specificity at other positions. The sequence is that of Peptide deformylase from Flavobacterium psychrophilum (strain ATCC 49511 / DSM 21280 / CIP 103535 / JIP02/86).